Consider the following 977-residue polypeptide: Serine/threonine-protein kinase N2 (977 aa).

3 consecutive REM-1 domains span residues 24 to 100, 114 to 194, and 200 to 280; these read NLDF…HIVV, DTPK…TSEI, and DVTT…ELPK. Residues 298-468 form the C2 domain; that stretch reads PPNSPRQSIM…LYLEPQGTLF (171 aa). Disordered regions lie at residues 342-381 and 531-576; these read GRSK…LSKS and AADL…KRNS. A compositionally biased stretch (polar residues) spans 358 to 378; it reads EARSSFMSRGNKNKSGSSRTL. The region spanning 650–909 is the Protein kinase domain; that stretch reads FKCVAVLGRG…AEEVKRHPFF (260 aa). ATP-binding positions include 656-664 and Lys679; that span reads LGRGHFGKV. Residue Asp775 is the Proton acceptor of the active site. Residues 910 to 977 form the AGC-kinase C-terminal domain; sequence RDMDWPGLLA…ADFDYIADWC (68 aa).

Belongs to the protein kinase superfamily. AGC Ser/Thr protein kinase family. PKC subfamily. In terms of processing, autophosphorylated. Phosphorylated. Post-translationally, proteolytically cleaved.

The protein resides in the cytoplasm. Its subcellular location is the nucleus. It localises to the membrane. It is found in the cell projection. The protein localises to the lamellipodium. The protein resides in the cytoskeleton. Its subcellular location is the cleavage furrow. It localises to the midbody. It is found in the cell junction. It carries out the reaction L-seryl-[protein] + ATP = O-phospho-L-seryl-[protein] + ADP + H(+). It catalyses the reaction L-threonyl-[protein] + ATP = O-phospho-L-threonyl-[protein] + ADP + H(+). Its activity is regulated as follows. Kinase activity is activated upon binding to GTP-bound Rho/Rac GTPases. Activated by lipids, particularly cardiolipin and to a lesser extent by other acidic phospholipids and unsaturated fatty acids. Two specific sites, Thr-809 (activation loop of the kinase domain) and Thr-951 (turn motif), may be needed to be phosphorylated for its full activation. Its function is as follows. Pkc-related serine/threonine-protein kinase and Rho/Rac effector protein that participates in specific signal transduction responses in the cell. May play a role in the regulation of cell cycle progression, actin cytoskeleton assembly, cell migration, cell adhesion and transcription activation signaling processes. The polypeptide is Serine/threonine-protein kinase N2 (pkn2) (Danio rerio (Zebrafish)).